Reading from the N-terminus, the 287-residue chain is ATP synthase subunit a (287 aa).

Transmembrane regions (helical) follow at residues 37–57, 96–116, 144–164, 187–207, 224–244, and 266–286; these read LDSV…MWLA, FIAP…AMDL, DLST…VYSI, PVFA…EYVA, ELVF…LSGV, and TLQA…AHEA.

It belongs to the ATPase A chain family. In terms of assembly, F-type ATPases have 2 components, CF(1) - the catalytic core - and CF(0) - the membrane proton channel. CF(1) has five subunits: alpha(3), beta(3), gamma(1), delta(1), epsilon(1). CF(0) has three main subunits: a(1), b(2) and c(9-12). The alpha and beta chains form an alternating ring which encloses part of the gamma chain. CF(1) is attached to CF(0) by a central stalk formed by the gamma and epsilon chains, while a peripheral stalk is formed by the delta and b chains.

It is found in the cell inner membrane. Its function is as follows. Key component of the proton channel; it plays a direct role in the translocation of protons across the membrane. This chain is ATP synthase subunit a, found in Acidovorax ebreus (strain TPSY) (Diaphorobacter sp. (strain TPSY)).